The primary structure comprises 539 residues: Hydroxylamine reductase (539 aa).

Cysteine 3, cysteine 6, cysteine 14, and cysteine 20 together coordinate [4Fe-4S] cluster. Residues histidine 232, glutamate 256, cysteine 300, cysteine 392, cysteine 420, cysteine 445, glutamate 480, and lysine 482 each coordinate hybrid [4Fe-2O-2S] cluster. Residue cysteine 392 is modified to Cysteine persulfide.

It belongs to the HCP family. The cofactor is [4Fe-4S] cluster. Hybrid [4Fe-2O-2S] cluster serves as cofactor.

It is found in the cytoplasm. The catalysed reaction is A + NH4(+) + H2O = hydroxylamine + AH2 + H(+). Its function is as follows. Catalyzes the reduction of hydroxylamine to form NH(3) and H(2)O. The polypeptide is Hydroxylamine reductase (Chlorobaculum tepidum (strain ATCC 49652 / DSM 12025 / NBRC 103806 / TLS) (Chlorobium tepidum)).